Here is a 191-residue protein sequence, read N- to C-terminus: Pyridoxal 5'-phosphate synthase subunit PdxT (191 aa).

Residue 46 to 48 (GES) participates in L-glutamine binding. Cys-78 functions as the Nucleophile in the catalytic mechanism. L-glutamine contacts are provided by residues Arg-105 and 133–134 (IR). Active-site charge relay system residues include His-169 and Glu-171.

This sequence belongs to the glutaminase PdxT/SNO family. As to quaternary structure, in the presence of PdxS, forms a dodecamer of heterodimers. Only shows activity in the heterodimer.

It catalyses the reaction aldehydo-D-ribose 5-phosphate + D-glyceraldehyde 3-phosphate + L-glutamine = pyridoxal 5'-phosphate + L-glutamate + phosphate + 3 H2O + H(+). It carries out the reaction L-glutamine + H2O = L-glutamate + NH4(+). The protein operates within cofactor biosynthesis; pyridoxal 5'-phosphate biosynthesis. Functionally, catalyzes the hydrolysis of glutamine to glutamate and ammonia as part of the biosynthesis of pyridoxal 5'-phosphate. The resulting ammonia molecule is channeled to the active site of PdxS. This chain is Pyridoxal 5'-phosphate synthase subunit PdxT, found in Brevibacillus brevis (strain 47 / JCM 6285 / NBRC 100599).